The primary structure comprises 251 residues: FHA domain-containing protein FHA1 (251 aa).

One can recognise an FHA domain in the interval 32–89; it reads IILGRNSKKSTVDVDLSSLGGGMNISRNHARIFYDFTRRRFSLEVLGKNGCFVEGVLH. The span at 163-174 shows a compositional bias: acidic residues; it reads EYDDEDDDEEED. A disordered region spans residues 163 to 209; sequence EYDDEDDDEEEDIRGSGKKTWRDGHEGVYASGEKKREGRSKADREAD. Residues 182–206 are compositionally biased toward basic and acidic residues; the sequence is TWRDGHEGVYASGEKKREGRSKADR.

As to expression, expressed in roots and vascular tissues near the shoot apex in young seedlings.

Its subcellular location is the nucleus. Its function is as follows. May play a role in the control of plant organ development. Does not show transactivation activity in yeast. The polypeptide is FHA domain-containing protein FHA1 (Arabidopsis thaliana (Mouse-ear cress)).